A 208-amino-acid polypeptide reads, in one-letter code: Ribosomal RNA small subunit methyltransferase G (208 aa).

Residues G73, L78, 127–128 (VE), and R141 contribute to the S-adenosyl-L-methionine site.

It belongs to the methyltransferase superfamily. RNA methyltransferase RsmG family.

It is found in the cytoplasm. The catalysed reaction is guanosine(527) in 16S rRNA + S-adenosyl-L-methionine = N(7)-methylguanosine(527) in 16S rRNA + S-adenosyl-L-homocysteine. Functionally, specifically methylates the N7 position of guanine in position 527 of 16S rRNA. The protein is Ribosomal RNA small subunit methyltransferase G of Cereibacter sphaeroides (strain ATCC 17025 / ATH 2.4.3) (Rhodobacter sphaeroides).